An 800-amino-acid chain; its full sequence is Ent-copalyl diphosphate synthase 2, chloroplastic (800 aa).

The N-terminal 47 residues, 1–47 (MQMQVLTAASSLPRATLLRPAAAEPWRQSFLQLQARPIQRPGIMLHC), are a transit peptide targeting the chloroplast. The segment at 52 to 80 (QGQETRERRQLDDDEHARPPQGGDDDVAA) is disordered. The span at 55-69 (ETRERRQLDDDEHAR) shows a compositional bias: basic and acidic residues. K242 provides a ligand contact to substrate. 2 residues coordinate Mg(2+): D374 and D376. The DXDD motif signature appears at 374–377 (DIDD). Residue K461 participates in substrate binding.

It belongs to the terpene synthase family. Mg(2+) serves as cofactor.

The protein resides in the plastid. The protein localises to the chloroplast. It catalyses the reaction (2E,6E,10E)-geranylgeranyl diphosphate = ent-copalyl diphosphate. Its pathway is secondary metabolite biosynthesis; terpenoid biosynthesis. Its function is as follows. Catalyzes the conversion of geranylgeranyl diphosphate to the phytoalexin precursor ent-copalyl diphosphate. The protein is Ent-copalyl diphosphate synthase 2, chloroplastic of Oryza sativa subsp. japonica (Rice).